The chain runs to 356 residues: MIYSDFISPQTQFYQLTVPFQLESGKVLIGVQVAYRSWGELNAQGDNGVLICHALTGSADADDWWEPLFGSGKAFNPDRDFIVCSNILGSCYGTTGPTTINPTTRKPYGVSFPKITIRDMVRLQAVLLEYLGVQSLRFVIGGSLGGMQSLEWALLYPDKVKSIAPIAVSGRHSAWCIGLSEAQRQAIYADPNWQGGNYTLDAPPNQGLAVARMMAMSTYRSWDSFTTRFGRQYDPSEKFAIASYLQHQGQKLTERFDANTYIILTHAMDGHDIARDRTAPNLSDYESVLGSIQQPTLVVAIDSDILYPPVEQQELANLIPNAQLSWLKSTHGHDAFLIDMAALNEIIQQNHEFVLF.

Residues 49 to 337 enclose the AB hydrolase-1 domain; sequence VLICHALTGS…KSTHGHDAFL (289 aa). Ser143 serves as the catalytic Nucleophile. Arg212 provides a ligand contact to substrate. Active-site residues include Asp304 and His333. Asp334 provides a ligand contact to substrate.

This sequence belongs to the AB hydrolase superfamily. MetX family. As to quaternary structure, homodimer.

The protein localises to the cytoplasm. It catalyses the reaction L-homoserine + acetyl-CoA = O-acetyl-L-homoserine + CoA. It participates in amino-acid biosynthesis; L-methionine biosynthesis via de novo pathway; O-acetyl-L-homoserine from L-homoserine: step 1/1. In terms of biological role, transfers an acetyl group from acetyl-CoA to L-homoserine, forming acetyl-L-homoserine. The polypeptide is Homoserine O-acetyltransferase (Nostoc punctiforme (strain ATCC 29133 / PCC 73102)).